Here is a 631-residue protein sequence, read N- to C-terminus: Probable potassium transport system protein Kup 1 (631 aa).

12 helical membrane passes run 17–37, 55–75, 101–121, 140–160, 166–186, 217–237, 249–269, 277–297, 338–358, 370–390, 395–415, and 420–440; these read LALG…LYAL, LSLI…MIIF, PLFY…GMLT, LYPY…SLQA, IGYL…ILGI, FLLG…ADIG, FFIA…NLIV, PFFM…ATVA, IYVP…CLAF, IAVN…AVSI, TFNV…FLGA, and FITG…IMYS.

Belongs to the HAK/KUP transporter (TC 2.A.72) family.

Its subcellular location is the cell inner membrane. It catalyses the reaction K(+)(in) + H(+)(in) = K(+)(out) + H(+)(out). Transport of potassium into the cell. Likely operates as a K(+):H(+) symporter. This Legionella pneumophila (strain Corby) protein is Probable potassium transport system protein Kup 1.